Here is a 471-residue protein sequence, read N- to C-terminus: Mitochondrial distribution and morphology protein 10 (471 aa).

The segment at 429 to 455 (PSSFSSPSRAANSTPAGGGQSVGGGIS) is disordered. Residues 444-455 (AGGGQSVGGGIS) show a composition bias toward gly residues.

Belongs to the MDM10 family. In terms of assembly, component of the ER-mitochondria encounter structure (ERMES) or MDM complex, composed of mmm1, mdm10, mdm12 and mdm34. Associates with the mitochondrial outer membrane sorting assembly machinery SAM(core) complex.

Its subcellular location is the mitochondrion outer membrane. Component of the ERMES/MDM complex, which serves as a molecular tether to connect the endoplasmic reticulum and mitochondria. Components of this complex are involved in the control of mitochondrial shape and protein biogenesis and may function in phospholipid exchange. mdm10 is involved in the late assembly steps of the general translocase of the mitochondrial outer membrane (TOM complex). Functions in the tom40-specific route of the assembly of outer membrane beta-barrel proteins, including the association of tom40 with the receptor tom22 and small TOM proteins. Can associate with the SAM(core) complex as well as the mdm12-mmm1 complex, both involved in late steps of the major beta-barrel assembly pathway, that is responsible for biogenesis of all outer membrane beta-barrel proteins. May act as a switch that shuttles between both complexes and channels precursor proteins into the tom40-specific pathway. Plays a role in mitochondrial morphology and in the inheritance of mitochondria. The protein is Mitochondrial distribution and morphology protein 10 (mdmB) of Aspergillus fumigatus (strain ATCC MYA-4609 / CBS 101355 / FGSC A1100 / Af293) (Neosartorya fumigata).